We begin with the raw amino-acid sequence, 274 residues long: Large ribosomal subunit protein uL2 (274 aa).

Residues R221–K274 form a disordered region.

The protein belongs to the universal ribosomal protein uL2 family. Part of the 50S ribosomal subunit. Forms a bridge to the 30S subunit in the 70S ribosome.

One of the primary rRNA binding proteins. Required for association of the 30S and 50S subunits to form the 70S ribosome, for tRNA binding and peptide bond formation. It has been suggested to have peptidyltransferase activity; this is somewhat controversial. Makes several contacts with the 16S rRNA in the 70S ribosome. This chain is Large ribosomal subunit protein uL2, found in Hamiltonella defensa subsp. Acyrthosiphon pisum (strain 5AT).